The sequence spans 412 residues: Phytoene synthase 1, chloroplastic (412 aa).

Residues 1–129 (MSVALLWVVS…AYDRCGEVCA (129 aa)) constitute a chloroplast transit peptide.

This sequence belongs to the phytoene/squalene synthase family. Monomer. Interacts with SGR1.

Its subcellular location is the plastid. The protein localises to the chloroplast. It carries out the reaction 2 (2E,6E,10E)-geranylgeranyl diphosphate = 15-cis-phytoene + 2 diphosphate. Its pathway is carotenoid biosynthesis; phytoene biosynthesis; all-trans-phytoene from geranylgeranyl diphosphate: step 1/1. Catalyzes the reaction from prephytoene diphosphate to phytoene. This is Phytoene synthase 1, chloroplastic (PSY1) from Solanum lycopersicum (Tomato).